Consider the following 274-residue polypeptide: Aliphatic sulfonates import ATP-binding protein SsuB 2 (274 aa).

Residues 21 to 235 (VQLRNVVRQF…DSGQAGFQLI (215 aa)) enclose the ABC transporter domain. 53-60 (GASGSGKT) is an ATP binding site.

This sequence belongs to the ABC transporter superfamily. Aliphatic sulfonates importer (TC 3.A.1.17.2) family. As to quaternary structure, the complex is composed of two ATP-binding proteins (SsuB), two transmembrane proteins (SsuC) and a solute-binding protein (SsuA).

The protein localises to the cell inner membrane. It catalyses the reaction ATP + H2O + aliphatic sulfonate-[sulfonate-binding protein]Side 1 = ADP + phosphate + aliphatic sulfonateSide 2 + [sulfonate-binding protein]Side 1.. Its function is as follows. Part of the ABC transporter complex SsuABC involved in aliphatic sulfonates import. Responsible for energy coupling to the transport system. In Pseudomonas syringae pv. syringae (strain B728a), this protein is Aliphatic sulfonates import ATP-binding protein SsuB 2.